Here is a 309-residue protein sequence, read N- to C-terminus: Putative proline iminopeptidase (309 aa).

The 259-residue stretch at 33–291 folds into the AB hydrolase-1 domain; sequence LYVHGGPGSG…LYVTNNAGHS (259 aa). Residue Ser-105 is the Nucleophile of the active site. Asp-262 is an active-site residue. The active-site Proton donor is the His-290.

This sequence belongs to the peptidase S33 family.

Its subcellular location is the cytoplasm. It catalyses the reaction Release of N-terminal proline from a peptide.. Functionally, specifically catalyzes the removal of N-terminal proline residues from peptides. In Mycoplasma pneumoniae (strain ATCC 29342 / M129 / Subtype 1) (Mycoplasmoides pneumoniae), this protein is Putative proline iminopeptidase (pip).